We begin with the raw amino-acid sequence, 279 residues long: Small ribosomal subunit protein uS9m (279 aa).

This sequence belongs to the universal ribosomal protein uS9 family.

The protein localises to the mitochondrion. The chain is Small ribosomal subunit protein uS9m (MRPS9) from Eremothecium gossypii (strain ATCC 10895 / CBS 109.51 / FGSC 9923 / NRRL Y-1056) (Yeast).